Consider the following 217-residue polypeptide: ATP synthase subunit a (217 aa).

Transmembrane regions (helical) follow at residues 5 to 25 (EHVI…LAAG), 63 to 83 (LIAS…LPFV), 89 to 109 (NINT…FEGF), 120 to 140 (FMGP…MSHL), 157 to 177 (GAIL…TLAV), and 191 to 213 (LAIV…GAVV).

This sequence belongs to the ATPase A chain family. As to quaternary structure, F-type ATPases have 2 components, CF(1) - the catalytic core - and CF(0) - the membrane proton channel. CF(1) has five subunits: alpha(3), beta(3), gamma(1), delta(1), epsilon(1). CF(0) has three main subunits: a(1), b(2) and c(9-12). The alpha and beta chains form an alternating ring which encloses part of the gamma chain. CF(1) is attached to CF(0) by a central stalk formed by the gamma and epsilon chains, while a peripheral stalk is formed by the delta and b chains.

The protein localises to the cell inner membrane. Functionally, key component of the proton channel; it plays a direct role in the translocation of protons across the membrane. This Hydrogenobaculum sp. (strain Y04AAS1) protein is ATP synthase subunit a.